The sequence spans 484 residues: tRNA-2-methylthio-N(6)-dimethylallyladenosine synthase (484 aa).

The MTTase N-terminal domain occupies 36 to 153 (GKLYIKTHGC…LPELIRARRE (118 aa)). Residues cysteine 45, cysteine 82, cysteine 116, cysteine 190, cysteine 194, and cysteine 197 each contribute to the [4Fe-4S] cluster site. The region spanning 176–415 (RAEGPSAFVS…HINAHAASIS (240 aa)) is the Radical SAM core domain. The 64-residue stretch at 416-479 (QSMVGSVQRV…SNSLRGRIQL (64 aa)) folds into the TRAM domain. Residues 428-450 (EGPSRRDPNELTGKSENMRPVNF) are disordered.

The protein belongs to the methylthiotransferase family. MiaB subfamily. Monomer. It depends on [4Fe-4S] cluster as a cofactor.

Its subcellular location is the cytoplasm. It carries out the reaction N(6)-dimethylallyladenosine(37) in tRNA + (sulfur carrier)-SH + AH2 + 2 S-adenosyl-L-methionine = 2-methylsulfanyl-N(6)-dimethylallyladenosine(37) in tRNA + (sulfur carrier)-H + 5'-deoxyadenosine + L-methionine + A + S-adenosyl-L-homocysteine + 2 H(+). Functionally, catalyzes the methylthiolation of N6-(dimethylallyl)adenosine (i(6)A), leading to the formation of 2-methylthio-N6-(dimethylallyl)adenosine (ms(2)i(6)A) at position 37 in tRNAs that read codons beginning with uridine. The protein is tRNA-2-methylthio-N(6)-dimethylallyladenosine synthase of Xanthomonas euvesicatoria pv. vesicatoria (strain 85-10) (Xanthomonas campestris pv. vesicatoria).